Consider the following 215-residue polypeptide: Small ribosomal subunit protein uS5 (215 aa).

The tract at residues 1–62 (MTDSSPQSNP…QERDSEWQER (62 aa)) is disordered. Low complexity predominate over residues 9–28 (NPNAVPGAADVPAAAEGQQQ). Over residues 29–61 (EQRRGGGRGERGDRRGGRRGDRRNQERDSEWQE) the composition is skewed to basic and acidic residues. The region spanning 59-122 (WQERVVQIRR…ADGKKHLVKV (64 aa)) is the S5 DRBM domain.

This sequence belongs to the universal ribosomal protein uS5 family. In terms of assembly, part of the 30S ribosomal subunit. Contacts proteins S4 and S8.

Its function is as follows. With S4 and S12 plays an important role in translational accuracy. Functionally, located at the back of the 30S subunit body where it stabilizes the conformation of the head with respect to the body. The polypeptide is Small ribosomal subunit protein uS5 (Parasynechococcus marenigrum (strain WH8102)).